The following is an 86-amino-acid chain: Large ribosomal subunit protein bL31 (86 aa).

4 residues coordinate Zn(2+): Cys-16, Cys-18, Cys-38, and Cys-41.

The protein belongs to the bacterial ribosomal protein bL31 family. Type A subfamily. Part of the 50S ribosomal subunit. The cofactor is Zn(2+).

Its function is as follows. Binds the 23S rRNA. The chain is Large ribosomal subunit protein bL31 from Acidothermus cellulolyticus (strain ATCC 43068 / DSM 8971 / 11B).